Consider the following 146-residue polypeptide: Large ribosomal subunit protein uL15 (146 aa).

The segment at 1–46 (MKLHELQPAPGSRKKAVRVGRGIGSGNGKTAGRGHKGQKARSGGGV) is disordered. Residues 21–31 (RGIGSGNGKTA) show a composition bias toward gly residues.

This sequence belongs to the universal ribosomal protein uL15 family. Part of the 50S ribosomal subunit.

Its function is as follows. Binds to the 23S rRNA. This is Large ribosomal subunit protein uL15 from Geobacillus thermodenitrificans (strain NG80-2).